A 107-amino-acid chain; its full sequence is uncharacterized protein (107 aa).

Transmembrane regions (helical) follow at residues 11-31 (CVNF…ILCI) and 58-78 (LFFL…LAFQ).

It localises to the mitochondrion membrane. This is an uncharacterized protein from Saccharomyces cerevisiae (strain ATCC 204508 / S288c) (Baker's yeast).